Reading from the N-terminus, the 359-residue chain is Peptide chain release factor 1 (359 aa).

The residue at position 235 (glutamine 235) is an N5-methylglutamine.

It belongs to the prokaryotic/mitochondrial release factor family. Post-translationally, methylated by PrmC. Methylation increases the termination efficiency of RF1.

The protein localises to the cytoplasm. In terms of biological role, peptide chain release factor 1 directs the termination of translation in response to the peptide chain termination codons UAG and UAA. The sequence is that of Peptide chain release factor 1 from Nitrosomonas europaea (strain ATCC 19718 / CIP 103999 / KCTC 2705 / NBRC 14298).